A 229-amino-acid polypeptide reads, in one-letter code: GTP cyclohydrolase 1 (229 aa).

Residues 1 to 21 (MDAKIKPLRAGKSADARTDFQ) are disordered. Zn(2+)-binding residues include Cys-118, His-121, and Cys-189.

This sequence belongs to the GTP cyclohydrolase I family. Toroid-shaped homodecamer, composed of two pentamers of five dimers.

The catalysed reaction is GTP + H2O = 7,8-dihydroneopterin 3'-triphosphate + formate + H(+). It participates in cofactor biosynthesis; 7,8-dihydroneopterin triphosphate biosynthesis; 7,8-dihydroneopterin triphosphate from GTP: step 1/1. This Rhodopseudomonas palustris (strain HaA2) protein is GTP cyclohydrolase 1.